A 429-amino-acid chain; its full sequence is Glutamate-1-semialdehyde 2,1-aminomutase 2 (429 aa).

At Lys-268 the chain carries N6-(pyridoxal phosphate)lysine.

This sequence belongs to the class-III pyridoxal-phosphate-dependent aminotransferase family. HemL subfamily. In terms of assembly, homodimer. The cofactor is pyridoxal 5'-phosphate.

It localises to the cytoplasm. It carries out the reaction (S)-4-amino-5-oxopentanoate = 5-aminolevulinate. It functions in the pathway porphyrin-containing compound metabolism; protoporphyrin-IX biosynthesis; 5-aminolevulinate from L-glutamyl-tRNA(Glu): step 2/2. This is Glutamate-1-semialdehyde 2,1-aminomutase 2 from Staphylococcus carnosus (strain TM300).